The sequence spans 894 residues: DNA mismatch repair protein MutS (894 aa).

629–636 is an ATP binding site; the sequence is GPNMGGKS. The tract at residues 819–840 is disordered; that stretch reads TPTPQLDLFAPPPHPDTSDDDE.

This sequence belongs to the DNA mismatch repair MutS family.

Its function is as follows. This protein is involved in the repair of mismatches in DNA. It is possible that it carries out the mismatch recognition step. This protein has a weak ATPase activity. In Cupriavidus pinatubonensis (strain JMP 134 / LMG 1197) (Cupriavidus necator (strain JMP 134)), this protein is DNA mismatch repair protein MutS.